Consider the following 101-residue polypeptide: Trp operon repressor homolog (101 aa).

The DNA-binding element occupies 59 to 82 (QREIAQKYGVSIAQITRGSNALKA).

This sequence belongs to the TrpR family. As to quaternary structure, homodimer.

Its subcellular location is the cytoplasm. Its function is as follows. This protein is an aporepressor. When complexed with L-tryptophan it binds the operator region of the trp operon and prevents the initiation of transcription. The chain is Trp operon repressor homolog from Chlamydia caviae (strain ATCC VR-813 / DSM 19441 / 03DC25 / GPIC) (Chlamydophila caviae).